Here is a 397-residue protein sequence, read N- to C-terminus: MESRGTKREAGKIEVAEPRNKLPRPAPSLPTDPALYSGPFPFYRRPSELGCFSLDAQRQYHGDARALRYYSPPPTNGQSPNFDLRDGYPDRYQPRDEEVQERLDHLLRWLLEHRGQLEGGPGWLAGAIVTWRGHLTKLLTTPYERQEGWQLAASRFRGTLYLSEVETPAARVQRLTRPPLLRELMYMGYKFEQYMCADKPGVSPDPSGEVNTNVAFCSVLRSRLGNHPLLFSGEVDCTDPQAPSTQPPTCYVELKTSKEMHSPGQWKSFYRHKLLKWWAQSFLPGVPNVVAGFRNPEGFVCSLKTFPTMEMFEYVRNDRDGWNPSVCMNFCAAFLSFAQNTAVQDDPRLVYLFSWEPGGPVTVSEHRDAPHAFLPPWYVEAVTQDLPSPPKTPSPKD.

A compositionally biased stretch (basic and acidic residues) spans 1-20; that stretch reads MESRGTKREAGKIEVAEPRN. The segment at 1-37 is disordered; the sequence is MESRGTKREAGKIEVAEPRNKLPRPAPSLPTDPALYS. A substrate-binding site is contributed by Arg-58. The disordered stretch occupies residues 67 to 88; sequence LRYYSPPPTNGQSPNFDLRDGY. Residues Glu-101 and 131-133 contribute to the substrate site; that span reads WRG. Residue Glu-192 participates in Mg(2+) binding. Residues Cys-217 and Glu-234 each contribute to the substrate site. Positions 234, 236, 253, and 254 each coordinate Mg(2+). The substrate site is built by Lys-255 and Gln-280. The residue at position 392 (Thr-392) is a Phosphothreonine. Ser-394 carries the post-translational modification Phosphoserine.

It belongs to the DXO/Dom3Z family. The cofactor is Mg(2+).

The protein resides in the nucleus. It catalyses the reaction a 5'-end triphospho-ribonucleoside in mRNA + H2O = a 5'-end phospho-ribonucleoside in mRNA + diphosphate + H(+). The catalysed reaction is a 5'-end NAD(+)-phospho-ribonucleoside in mRNA + H2O = a 5'-end phospho-ribonucleoside in mRNA + NAD(+) + H(+). It carries out the reaction a 5'-end NAD(+)-phospho-ribonucleoside in snoRNA + H2O = a 5'-end phospho-ribonucleoside in snoRNA + NAD(+) + H(+). The enzyme catalyses a 5'-end (N(7)-methyl 5'-triphosphoguanosine)-ribonucleoside-ribonucleotide in mRNA + H2O = a (N(7)-methyl 5'-triphosphoguanosine)-nucleoside + a 5'-end phospho-ribonucleoside in mRNA + H(+). It catalyses the reaction a 5'-end FAD-phospho-ribonucleoside in mRNA + H2O = a 5'-end phospho-ribonucleoside in mRNA + FAD + H(+). The catalysed reaction is a 5'-end CoA-ribonucleoside in mRNA + H2O = 3'-dephospho-CoA + a 5'-end phospho-ribonucleoside in mRNA + H(+). Its function is as follows. Decapping enzyme for NAD-capped RNAs: specifically hydrolyzes the nicotinamide adenine dinucleotide (NAD) cap from a subset of RNAs by removing the entire NAD moiety from the 5'-end of an NAD-capped RNA. The NAD-cap is present at the 5'-end of some RNAs and snoRNAs. In contrast to the canonical 5'-end N7 methylguanosine (m7G) cap, the NAD cap promotes mRNA decay. Preferentially acts on NAD-capped transcripts in response to environmental stress. Also acts as a non-canonical decapping enzyme that removes the entire cap structure of m7G capped or incompletely capped RNAs and mediates their subsequent degradation. Specifically degrades pre-mRNAs with a defective 5'-end m7G cap and is part of a pre-mRNA capping quality control. Has decapping activity toward incomplete 5'-end m7G cap mRNAs such as unmethylated 5'-end-capped RNA (cap0), while it has no activity toward 2'-O-ribose methylated m7G cap (cap1). In contrast to canonical decapping enzymes DCP2 and NUDT16, which cleave the cap within the triphosphate linkage, the decapping activity releases the entire cap structure GpppN and a 5'-end monophosphate RNA. Also has 5'-3' exoribonuclease activities: The 5'-end monophosphate RNA is then degraded by the 5'-3' exoribonuclease activity, enabling this enzyme to decap and degrade incompletely capped mRNAs. Also possesses RNA 5'-pyrophosphohydrolase activity by hydrolyzing the 5'-end triphosphate to release pyrophosphates. Exhibits decapping activity towards FAD-capped RNAs. Exhibits decapping activity towards dpCoA-capped RNAs in vitro. The polypeptide is Decapping and exoribonuclease protein (Bos taurus (Bovine)).